Reading from the N-terminus, the 693-residue chain is tRNA (guanine(27)-N(2))-dimethyltransferase (693 aa).

Residues 95–99 (HKLRR) carry the Nucleolar localization signal motif. The C2H2-type zinc finger occupies 144–166 (YHCIICSATITRRTDMLGHVRRH). In terms of domain architecture, Trm1 methyltransferase spans 187-648 (EILKEADTDV…APLMQFKSIL (462 aa)). S-adenosyl-L-methionine is bound by residues Arg-220, Asp-267, Asp-317, and Ala-318. Zn(2+)-binding residues include Cys-448, Cys-451, Cys-473, and Cys-475. A Glycyl lysine isopeptide (Lys-Gly) (interchain with G-Cter in SUMO2) cross-link involves residue Lys-545. A phosphoserine mark is found at Ser-572 and Ser-667.

The protein belongs to the class I-like SAM-binding methyltransferase superfamily. Trm1 family.

Its subcellular location is the nucleus. It is found in the nucleolus. The catalysed reaction is guanosine(27) in tRNA(Tyr) + 2 S-adenosyl-L-methionine = N(2)-dimethylguanosine(27) in tRNA(Tyr) + 2 S-adenosyl-L-homocysteine + 2 H(+). In terms of biological role, specifically dimethylates a single guanine residue at position 27 of tRNA(Tyr) using S-adenosyl-L-methionine as donor of the methyl groups. Dimethylation at position 27 of tRNA(Tyr) is required for efficient translation of tyrosine codons. Also required to maintain 3-(3-amino-3-carboxypropyl)uridine (acp3U) in the D-loop of several cytoplasmic tRNAs. This Macaca fascicularis (Crab-eating macaque) protein is tRNA (guanine(27)-N(2))-dimethyltransferase (TRMT1L).